The following is a 538-amino-acid chain: Chaperonin GroEL (538 aa).

Residues 29–32 (TLGP), 86–90 (DGTTT), glycine 413, 479–481 (DAL), and aspartate 495 contribute to the ATP site.

The protein belongs to the chaperonin (HSP60) family. Forms a cylinder of 14 subunits composed of two heptameric rings stacked back-to-back. Interacts with the co-chaperonin GroES.

It is found in the cytoplasm. It carries out the reaction ATP + H2O + a folded polypeptide = ADP + phosphate + an unfolded polypeptide.. Together with its co-chaperonin GroES, plays an essential role in assisting protein folding. The GroEL-GroES system forms a nano-cage that allows encapsulation of the non-native substrate proteins and provides a physical environment optimized to promote and accelerate protein folding. This chain is Chaperonin GroEL, found in Fervidobacterium nodosum (strain ATCC 35602 / DSM 5306 / Rt17-B1).